The chain runs to 204 residues: Urease accessory protein UreG (204 aa).

15–22 provides a ligand contact to GTP; sequence GPVGSGKT.

The protein belongs to the SIMIBI class G3E GTPase family. UreG subfamily. As to quaternary structure, homodimer. UreD, UreF and UreG form a complex that acts as a GTP-hydrolysis-dependent molecular chaperone, activating the urease apoprotein by helping to assemble the nickel containing metallocenter of UreC. The UreE protein probably delivers the nickel.

It localises to the cytoplasm. Functionally, facilitates the functional incorporation of the urease nickel metallocenter. This process requires GTP hydrolysis, probably effectuated by UreG. The polypeptide is Urease accessory protein UreG (Methylobacterium nodulans (strain LMG 21967 / CNCM I-2342 / ORS 2060)).